A 453-amino-acid chain; its full sequence is Ribosomal protein uS12 methylthiotransferase RimO (453 aa).

One can recognise an MTTase N-terminal domain in the interval 9–124; sequence PKIGFVSLGC…VMDAVHKHMP (116 aa). Positions 18, 54, 83, 155, 159, and 162 each coordinate [4Fe-4S] cluster. The Radical SAM core domain occupies 141-382; that stretch reads LTPKHFAYLK…MLLQEEISKK (242 aa). A TRAM domain is found at 385-453; it reads QAKVGKTMRV…ADAHDLWAEA (69 aa).

It belongs to the methylthiotransferase family. RimO subfamily. [4Fe-4S] cluster serves as cofactor.

It localises to the cytoplasm. It catalyses the reaction L-aspartate(89)-[ribosomal protein uS12]-hydrogen + (sulfur carrier)-SH + AH2 + 2 S-adenosyl-L-methionine = 3-methylsulfanyl-L-aspartate(89)-[ribosomal protein uS12]-hydrogen + (sulfur carrier)-H + 5'-deoxyadenosine + L-methionine + A + S-adenosyl-L-homocysteine + 2 H(+). Catalyzes the methylthiolation of an aspartic acid residue of ribosomal protein uS12. In Janthinobacterium sp. (strain Marseille) (Minibacterium massiliensis), this protein is Ribosomal protein uS12 methylthiotransferase RimO.